Here is a 201-residue protein sequence, read N- to C-terminus: Small ribosomal subunit protein uS4 (201 aa).

Positions 91-151 (SRLDNVVYRA…EKSRKMVWFD (61 aa)) constitute an S4 RNA-binding domain.

The protein belongs to the universal ribosomal protein uS4 family. In terms of assembly, part of the 30S ribosomal subunit. Contacts protein S5. The interaction surface between S4 and S5 is involved in control of translational fidelity.

One of the primary rRNA binding proteins, it binds directly to 16S rRNA where it nucleates assembly of the body of the 30S subunit. In terms of biological role, with S5 and S12 plays an important role in translational accuracy. This chain is Small ribosomal subunit protein uS4, found in Corynebacterium kroppenstedtii (strain DSM 44385 / JCM 11950 / CIP 105744 / CCUG 35717).